The following is a 238-amino-acid chain: Outer membrane protein A (238 aa).

Transmembrane regions (beta stranded) follow at residues leucine 1 to proline 8, leucine 13 to glycine 21, proline 43 to alanine 52, isoleucine 57 to glutamine 64, and leucine 83 to arginine 91. 3 repeat units span residues alanine 104–proline 105, alanine 106–proline 107, and alanine 108–proline 109. A 3 X 2 AA tandem repeats of A-P region spans residues alanine 104–proline 109. In terms of domain architecture, OmpA-like spans valine 111–isoleucine 238. Cysteine 212 and cysteine 224 are disulfide-bonded.

Belongs to the outer membrane OOP (TC 1.B.6) superfamily. OmpA family. Monomer and homodimer.

It is found in the cell outer membrane. With TolR probably plays a role in maintaining the position of the peptidoglycan cell wall in the periplasm. Acts as a porin with low permeability that allows slow penetration of small solutes; an internal gate slows down solute passage. This Citrobacter freundii protein is Outer membrane protein A.